A 289-amino-acid chain; its full sequence is Extracellular ribonuclease (289 aa).

Residues 1-24 (MTKKLWFLPIVCLFFILGWTAPSA) form the signal peptide. A propeptide spanning residues 25-51 (SAGAPADTNLYSRLAVSTAGGTTLFPQ) is cleaved from the precursor. The tract at residues 177–197 (FDNGGSEYPKAPGNYYDGDSW) is disordered.

It is found in the secreted. In terms of biological role, mg(2+)-activated ribonuclease which hydrolyzes RNA apparently nonspecifically into oligonucleotides with 5'-terminal phosphate. The protein is Extracellular ribonuclease (bsn) of Bacillus amyloliquefaciens (Bacillus velezensis).